Reading from the N-terminus, the 576-residue chain is Apolipoprotein N-acyltransferase 1 (576 aa).

A run of 7 helical transmembrane segments spans residues 15–35 (LILC…FSFF), 38–58 (GVFA…TSIW), 60–80 (AFLW…YWIP), 92–112 (FVSI…FFLF), 128–148 (YILL…FQIF), 168–188 (ICGV…FLIL), and 204–224 (IASL…IGYI). A CN hydrolase domain is found at 236 to 538 (LSVLMIQPDT…TGTRAFSIRL (303 aa)). Glu-285 functions as the Proton acceptor in the catalytic mechanism. Lys-355 is a catalytic residue. Cys-446 acts as the Nucleophile in catalysis. The chain crosses the membrane as a helical span at residues 549-569 (FGNSFLWIFCILILISRLIFV).

This sequence belongs to the CN hydrolase family. Apolipoprotein N-acyltransferase subfamily.

It is found in the cell inner membrane. It carries out the reaction N-terminal S-1,2-diacyl-sn-glyceryl-L-cysteinyl-[lipoprotein] + a glycerophospholipid = N-acyl-S-1,2-diacyl-sn-glyceryl-L-cysteinyl-[lipoprotein] + a 2-acyl-sn-glycero-3-phospholipid + H(+). The protein operates within protein modification; lipoprotein biosynthesis (N-acyl transfer). Functionally, catalyzes the phospholipid dependent N-acylation of the N-terminal cysteine of apolipoprotein, the last step in lipoprotein maturation. This Leptospira interrogans serogroup Icterohaemorrhagiae serovar Lai (strain 56601) protein is Apolipoprotein N-acyltransferase 1.